The primary structure comprises 252 residues: Orotidine 5'-phosphate decarboxylase (252 aa).

Substrate contacts are provided by residues aspartate 26, lysine 48, 75–84 (DLKFHDIPNT), threonine 135, arginine 196, glutamine 205, glycine 225, and arginine 226. The active-site Proton donor is the lysine 77.

The protein belongs to the OMP decarboxylase family. Type 1 subfamily. As to quaternary structure, homodimer.

It carries out the reaction orotidine 5'-phosphate + H(+) = UMP + CO2. It functions in the pathway pyrimidine metabolism; UMP biosynthesis via de novo pathway; UMP from orotate: step 2/2. In terms of biological role, catalyzes the decarboxylation of orotidine 5'-monophosphate (OMP) to uridine 5'-monophosphate (UMP). The chain is Orotidine 5'-phosphate decarboxylase from Sodalis glossinidius (strain morsitans).